Consider the following 337-residue polypeptide: Fructose-1,6-bisphosphatase class 1 (337 aa).

Glutamate 89, aspartate 112, leucine 114, and aspartate 115 together coordinate Mg(2+). Substrate is bound by residues 115–118, asparagine 208, tyrosine 241, and lysine 271; that span reads DGSS. Glutamate 277 serves as a coordination point for Mg(2+).

Belongs to the FBPase class 1 family. In terms of assembly, homotetramer. It depends on Mg(2+) as a cofactor.

The protein resides in the cytoplasm. It carries out the reaction beta-D-fructose 1,6-bisphosphate + H2O = beta-D-fructose 6-phosphate + phosphate. Its pathway is carbohydrate biosynthesis; gluconeogenesis. This Psychromonas ingrahamii (strain DSM 17664 / CCUG 51855 / 37) protein is Fructose-1,6-bisphosphatase class 1.